The following is a 660-amino-acid chain: Bifunctional polymyxin resistance protein ArnA (660 aa).

Positions 1–304 are formyltransferase ArnAFT; sequence MKTVVFAYHD…TLGLVQGSRL (304 aa). 86 to 88 serves as a coordination point for (6R)-10-formyltetrahydrofolate; the sequence is HLI. The Proton donor; for formyltransferase activity role is filled by His-104. (6R)-10-formyltetrahydrofolate is bound by residues Arg-114 and 136-140; that span reads VKRAD. Positions 314–660 are dehydrogenase ArnADH; that stretch reads RRTRVLILGV…RTVDLTDKPS (347 aa). NAD(+) contacts are provided by residues Asp-347 and 368–369; that span reads DI. UDP-alpha-D-glucuronate is bound by residues Ala-393, Tyr-398, and 432–433; that span reads TS. Residue Glu-434 is the Proton acceptor; for decarboxylase activity of the active site. UDP-alpha-D-glucuronate contacts are provided by residues Arg-460, Asn-492, 526 to 535, and Tyr-613; that span reads KLIDGGKQKR. Catalysis depends on Arg-619, which acts as the Proton donor; for decarboxylase activity.

It in the N-terminal section; belongs to the Fmt family. UDP-L-Ara4N formyltransferase subfamily. The protein in the C-terminal section; belongs to the NAD(P)-dependent epimerase/dehydratase family. UDP-glucuronic acid decarboxylase subfamily. Homohexamer, formed by a dimer of trimers.

The catalysed reaction is UDP-alpha-D-glucuronate + NAD(+) = UDP-beta-L-threo-pentopyranos-4-ulose + CO2 + NADH. It carries out the reaction UDP-4-amino-4-deoxy-beta-L-arabinose + (6R)-10-formyltetrahydrofolate = UDP-4-deoxy-4-formamido-beta-L-arabinose + (6S)-5,6,7,8-tetrahydrofolate + H(+). It functions in the pathway nucleotide-sugar biosynthesis; UDP-4-deoxy-4-formamido-beta-L-arabinose biosynthesis; UDP-4-deoxy-4-formamido-beta-L-arabinose from UDP-alpha-D-glucuronate: step 1/3. Its pathway is nucleotide-sugar biosynthesis; UDP-4-deoxy-4-formamido-beta-L-arabinose biosynthesis; UDP-4-deoxy-4-formamido-beta-L-arabinose from UDP-alpha-D-glucuronate: step 3/3. The protein operates within bacterial outer membrane biogenesis; lipopolysaccharide biosynthesis. In terms of biological role, bifunctional enzyme that catalyzes the oxidative decarboxylation of UDP-glucuronic acid (UDP-GlcUA) to UDP-4-keto-arabinose (UDP-Ara4O) and the addition of a formyl group to UDP-4-amino-4-deoxy-L-arabinose (UDP-L-Ara4N) to form UDP-L-4-formamido-arabinose (UDP-L-Ara4FN). The modified arabinose is attached to lipid A and is required for resistance to polymyxin and cationic antimicrobial peptides. The protein is Bifunctional polymyxin resistance protein ArnA of Shigella boydii serotype 4 (strain Sb227).